Here is a 702-residue protein sequence, read N- to C-terminus: MA3 DOMAIN-CONTAINING TRANSLATION REGULATORY FACTOR 3 (702 aa).

The disordered stretch occupies residues 1–100 (MEGFLTDQQR…PNDPNYDSGE (100 aa)). Over residues 53-65 (VKHRRSHAGRSIR) the composition is skewed to basic residues. Basic and acidic residues predominate over residues 81 to 91 (IDTDGDYHIDP). The 122-residue stretch at 116-237 (DYKKAAASII…PPAFLPRAAK (122 aa)) folds into the MI 1 domain. Positions 267-274 (ERRWGGQT) match the Nuclear localization signal 1 motif. MI domains lie at 280–401 (EVKK…PSGE), 414–535 (RFKE…EISS), and 577–697 (DAKD…SLTE). The short motif at 615 to 622 (VKKALVMG) is the Nuclear localization signal 2 element.

Belongs to the PDCD4 family. Interacts with EIN2, ETR2 and EIN4. Binds to EIF4A1. The association with ribosomes is modulated by cellular energy status and TOR activity. As to expression, mostly expressed in vegetative tissues, such as leaves and stems, and, to a lower extent, in roots and reproductive tissues, such as flower buds and flowers. Expressed in seedlings, roots, cauline leaf tips and flowers.

Its subcellular location is the nucleus. The protein localises to the cytoplasm. The protein resides in the cytosol. Its function is as follows. Involved in target of rapamycin (TOR)-regulated translation control, especially under energy-deficient conditions. Involved in the regulation of the ethylene-mediated signaling pathway. Involved in salt stress responses. Reduced cotyledons size and early flowering. This chain is MA3 DOMAIN-CONTAINING TRANSLATION REGULATORY FACTOR 3, found in Arabidopsis thaliana (Mouse-ear cress).